The following is a 438-amino-acid chain: GTPase Der (438 aa).

EngA-type G domains lie at proline 3–glutamate 168 and isoleucine 179–arginine 354. Residues glycine 9–serine 16, aspartate 56–tyrosine 60, asparagine 120–aspartate 123, glycine 185–serine 192, aspartate 232–leucine 236, and asparagine 297–aspartate 300 contribute to the GTP site. In terms of domain architecture, KH-like spans glutamine 355–lysine 438.

It belongs to the TRAFAC class TrmE-Era-EngA-EngB-Septin-like GTPase superfamily. EngA (Der) GTPase family. Associates with the 50S ribosomal subunit.

Its function is as follows. GTPase that plays an essential role in the late steps of ribosome biogenesis. In Chlorobaculum parvum (strain DSM 263 / NCIMB 8327) (Chlorobium vibrioforme subsp. thiosulfatophilum), this protein is GTPase Der.